A 147-amino-acid chain; its full sequence is uncharacterized protein (147 aa).

An HTH LytTR-type domain is found at 44–147 (LVGYIDKEIH…LKSIKERLSI (104 aa)).

Its subcellular location is the cytoplasm. This is an uncharacterized protein from Staphylococcus aureus (strain COL).